A 153-amino-acid chain; its full sequence is Ribosome maturation factor RimP (153 aa).

This sequence belongs to the RimP family.

It localises to the cytoplasm. Functionally, required for maturation of 30S ribosomal subunits. The sequence is that of Ribosome maturation factor RimP from Marinomonas sp. (strain MWYL1).